A 542-amino-acid polypeptide reads, in one-letter code: Ribonuclease Y (542 aa).

A helical transmembrane segment spans residues methionine 1–alanine 21. Residues serine 52–alanine 92 are disordered. Residues alanine 59–alanine 92 show a composition bias toward basic and acidic residues. Positions valine 229–leucine 289 constitute a KH domain. Residues valine 355–alanine 449 enclose the HD domain.

Belongs to the RNase Y family.

The protein resides in the cell membrane. Functionally, endoribonuclease that initiates mRNA decay. This chain is Ribonuclease Y, found in Cutibacterium acnes (strain DSM 16379 / KPA171202) (Propionibacterium acnes).